The primary structure comprises 315 residues: Ribosomal RNA small subunit methyltransferase H (315 aa).

Residues 35 to 37 (GGH), D55, F79, D101, and Q108 each bind S-adenosyl-L-methionine.

It belongs to the methyltransferase superfamily. RsmH family.

The protein localises to the cytoplasm. It carries out the reaction cytidine(1402) in 16S rRNA + S-adenosyl-L-methionine = N(4)-methylcytidine(1402) in 16S rRNA + S-adenosyl-L-homocysteine + H(+). Its function is as follows. Specifically methylates the N4 position of cytidine in position 1402 (C1402) of 16S rRNA. This Photobacterium profundum (strain SS9) protein is Ribosomal RNA small subunit methyltransferase H.